The following is a 621-amino-acid chain: UvrABC system protein C (621 aa).

The GIY-YIG domain occupies 20 to 106 (TQSGIYQFFD…IKSLKPKYNI (87 aa)). Residues 212–247 (KALLKILESKMHTLSHNLQFEEAAIMRDRIQKITQM) enclose the UVR domain.

This sequence belongs to the UvrC family. As to quaternary structure, interacts with UvrB in an incision complex.

It is found in the cytoplasm. In terms of biological role, the UvrABC repair system catalyzes the recognition and processing of DNA lesions. UvrC both incises the 5' and 3' sides of the lesion. The N-terminal half is responsible for the 3' incision and the C-terminal half is responsible for the 5' incision. This is UvrABC system protein C from Helicobacter hepaticus (strain ATCC 51449 / 3B1).